A 278-amino-acid polypeptide reads, in one-letter code: 4-deoxy-L-threo-5-hexosulose-uronate ketol-isomerase (278 aa).

Zn(2+) is bound by residues His196, His198, Glu203, and His245.

Belongs to the KduI family. It depends on Zn(2+) as a cofactor.

It carries out the reaction 5-dehydro-4-deoxy-D-glucuronate = 3-deoxy-D-glycero-2,5-hexodiulosonate. The protein operates within glycan metabolism; pectin degradation; 2-dehydro-3-deoxy-D-gluconate from pectin: step 4/5. Its function is as follows. Catalyzes the isomerization of 5-dehydro-4-deoxy-D-glucuronate to 3-deoxy-D-glycero-2,5-hexodiulosonate. This chain is 4-deoxy-L-threo-5-hexosulose-uronate ketol-isomerase, found in Paraburkholderia phytofirmans (strain DSM 17436 / LMG 22146 / PsJN) (Burkholderia phytofirmans).